The primary structure comprises 590 residues: Ovarian abundant message protein (590 aa).

The tract at residues 1-71 (MQGTDNAPPG…SPGQPLVEEQ (71 aa)) is disordered. Residues 18 to 29 (SPRRIRHVRRHY) show a composition bias toward basic residues. A run of 27 repeats spans residues 66–71 (PLVEEQ), 72–77 (PLVEER), 78–83 (PPVEEQ), 84–89 (PLVEEQ), 90–95 (PLVEEQ), 96–101 (PLVEEQ), 102–107 (PLVEEQ), 108–113 (PLVEGQ), 114–119 (PLVEEQ), 120–125 (PLVEGQ), 126–131 (PPVEGQ), 132–137 (PLVEEQ), 138–143 (PLVEGQ), 144–149 (PLVEGQ), 150–155 (PLVEGQ), 156–161 (PLVEGQ), 162–167 (PLVGGQ), 168–173 (PLVGGQ), 174–179 (PLVEGQ), 180–185 (PLVEGQ), 300–305 (PLAGAP), 306–311 (PLAGVP), 312–317 (PLAVAL), 318–323 (PLAGAP), 324–329 (PLAGVP), 330–335 (PLAGAP), and 336–341 (PLAGAL). The interval 66–185 (PLVEEQPLVE…VEGQPLVEGQ (120 aa)) is 20 X 6 AA tandem repeats of P-[LP]-V-[EG]-[EG]-[QR]. Residues 300–347 (PLAGAPPLAGVPPLAVALPLAGAPPLAGVPPLAGAPPLAGALPRAGVL) form an 8 X 6 AA approximate tandem repeats of P-L-A-[GV]-[AV]-[PL] region. One copy of the 2-8; approximate repeat lies at 342-347 (PRAGVL). A run of 16 repeats spans residues 348 to 353 (RRAGVL), 354 to 359 (RRAGVL), 360 to 365 (RRAGVL), 366 to 371 (RRAGVL), 372 to 377 (RRAGVL), 378 to 383 (RRAGVL), 384 to 389 (RRAGVL), 390 to 395 (RRAGVL), 396 to 401 (RRAGVL), 402 to 407 (RRADVL), 408 to 413 (RRADVV), 419 to 424 (QQLADV), 425 to 430 (QRLADV), 431 to 436 (QRLADV), 437 to 442 (QRLADV), and 443 to 448 (QRLADV). Residues 348 to 413 (RRAGVLRRAG…ADVLRRADVV (66 aa)) are 11 X 6 AA tandem repeats of approximate R-R-A-[GD]-V-[LV]. A 6 X 6 AA approximate tandem repeats of Q-[QR]-L-A-D-V region spans residues 419-454 (QQLADVQRLADVQRLADVQRLADVQRLADVQRLVCV). The 4-6; approximate repeat unit spans residues 449–454 (QRLVCV).

In terms of tissue distribution, somatic ovarian tissue.

The polypeptide is Ovarian abundant message protein (OAM) (Ascaris suum (Pig roundworm)).